A 1463-amino-acid chain; its full sequence is Regulating synaptic membrane exocytosis protein 1 (1463 aa).

A disordered region spans residues 1 to 26; sequence MSSAVGPRGPRPPTVPPPMQELPDLS. Pro residues predominate over residues 9–20; that stretch reads GPRPPTVPPPMQ. Positions 22–205 constitute a RabBD domain; sequence LPDLSHLTEE…TKSGAWFFGS (184 aa). The FYVE-type zinc finger occupies 133–193; the sequence is KDDAPTCGIC…VCNLCRKQQE (61 aa). The Zn(2+) site is built by C139, C142, C155, C158, C163, C166, C185, and C188. Positions 205–393 are disordered; it reads SGPQQPSQDG…DVELESESVS (189 aa). A compositionally biased stretch (polar residues) spans 206-222; it reads GPQQPSQDGTLSDTATG. The span at 227–240 shows a compositional bias: basic and acidic residues; it reads VPREKKARLQERSR. A compositionally biased stretch (polar residues) spans 241 to 256; the sequence is SQTPLSTAAVSSQDTA. The span at 327–372 shows a compositional bias: basic and acidic residues; sequence ADERERKERRETRRLEKGRSQDYPDRLEKREDGRVAEDEKQRKEEE. Residues 381 to 391 are compositionally biased toward acidic residues; sequence SCEDVELESES. At S413 the chain carries Phosphoserine. The region spanning 440–526 is the PDZ domain; the sequence is RTTMPKESGA…EPQVEIIVSR (87 aa). Residues 533–567 form a disordered region; it reads RIPESSHPPLESSSSSFESQKMERPSISVISPTSP. The span at 535-551 shows a compositional bias: low complexity; that stretch reads PESSHPPLESSSSSFES. Phosphoserine occurs at positions 563 and 566. Residues 577–700 form the C2 1 domain; that stretch reads LPGQLSVKLW…ALLDDEPHWY (124 aa). A disordered region spans residues 705-856; it reads HDESSLPLPQ…YSSEPDSELL (152 aa). S716 is subject to Phosphoserine. Residues 770–779 are compositionally biased toward polar residues; that stretch reads ATTLTVPEQQ. A Phosphoserine modification is found at S812. Residues 827 to 844 show a composition bias toward basic and acidic residues; sequence RHHDASRSLADHRSRHAE. S866 bears the Phosphoserine mark. Residues 874-1049 are disordered; sequence SELQPSLDRA…RQLPQVPVRS (176 aa). The span at 928–941 shows a compositional bias: basic and acidic residues; it reads PENDRHSRKSERSS. Residues 1021–1035 are compositionally biased toward polar residues; it reads QGSPTQSPPADTSFG. At S1023 the chain carries Phosphoserine. Phosphothreonine is present on T1025. Residues S1027, S1079, S1081, S1082, S1110, S1111, and S1113 each carry the phosphoserine modification. A disordered region spans residues 1104–1161; the sequence is DNASAKSSDSDVSDVSAISRASSTSRLSSTSFMSEQSERPRGRISSFTPKMQGRRMGT. Residues 1116 to 1137 show a composition bias toward low complexity; it reads SDVSAISRASSTSRLSSTSFMS. Phosphoserine is present on S1187. The tract at residues 1216 to 1266 is disordered; sequence RSRSTSQLSQTESGHKKLKSTIQRSTETGMAAEMRKMVRQPSRESTDGSIN. Residues 1248–1261 show a composition bias toward basic and acidic residues; it reads EMRKMVRQPSREST. One can recognise a C2 2 domain in the interval 1309–1427; the sequence is AMGDIQIGME…DLSSMVIGWY (119 aa). Phosphoserine is present on residues S1448, S1451, S1454, and S1463.

In terms of assembly, binds SNAP25, SYT1 and CACNA1B. Interaction with SYT1 is enhanced by calcium ions. Interaction with SNAP25 is weaker in the presence of calcium ions. Interacts with TSPOAP1 and RIMBP2; interacts with PPFIA3 and PPFIA4. Interacts with ERC1. Interacts with RAB3A, RAB3B and RAB3D that have been activated by GTP-binding. Interacts with RAB3C, RAB10, RAB26 and RAB37. Binds UNC13A. Post-translationally, phosphorylated by BRSK1.

The protein localises to the cell membrane. The protein resides in the synapse. It is found in the presynaptic cell membrane. In terms of biological role, rab effector involved in exocytosis. May act as scaffold protein that regulates neurotransmitter release at the active zone. Essential for maintaining normal probability of neurotransmitter release and for regulating release during short-term synaptic plasticity. Plays a role in dendrite formation by melanocytes. The sequence is that of Regulating synaptic membrane exocytosis protein 1 (Rims1) from Mus musculus (Mouse).